The following is a 586-amino-acid chain: Phosphomethylpyrimidine synthase (586 aa).

Disordered stretches follow at residues Ile-38–Pro-59 and Gly-92–Gln-114. The segment covering Gly-92–Val-102 has biased composition (basic and acidic residues). Substrate-binding positions include Asn-193, Met-222, Tyr-251, His-287, Ser-307–Gly-309, Asp-348–Arg-351, and Glu-387. His-391 lines the Zn(2+) pocket. Tyr-414 contributes to the substrate binding site. His-455 provides a ligand contact to Zn(2+). Positions 535, 538, and 543 each coordinate [4Fe-4S] cluster.

Belongs to the ThiC family. [4Fe-4S] cluster is required as a cofactor.

It catalyses the reaction 5-amino-1-(5-phospho-beta-D-ribosyl)imidazole + S-adenosyl-L-methionine = 4-amino-2-methyl-5-(phosphooxymethyl)pyrimidine + CO + 5'-deoxyadenosine + formate + L-methionine + 3 H(+). The protein operates within cofactor biosynthesis; thiamine diphosphate biosynthesis. Functionally, catalyzes the synthesis of the hydroxymethylpyrimidine phosphate (HMP-P) moiety of thiamine from aminoimidazole ribotide (AIR) in a radical S-adenosyl-L-methionine (SAM)-dependent reaction. This Bacillus cytotoxicus (strain DSM 22905 / CIP 110041 / 391-98 / NVH 391-98) protein is Phosphomethylpyrimidine synthase.